The following is a 397-amino-acid chain: tRNA(Met) cytidine acetate ligase (397 aa).

Residues V7–H20, G101, N152, and R177 each bind ATP.

It belongs to the TmcAL family.

The protein resides in the cytoplasm. It carries out the reaction cytidine(34) in elongator tRNA(Met) + acetate + ATP = N(4)-acetylcytidine(34) in elongator tRNA(Met) + AMP + diphosphate. In terms of biological role, catalyzes the formation of N(4)-acetylcytidine (ac(4)C) at the wobble position of elongator tRNA(Met), using acetate and ATP as substrates. First activates an acetate ion to form acetyladenylate (Ac-AMP) and then transfers the acetyl group to tRNA to form ac(4)C34. This chain is tRNA(Met) cytidine acetate ligase, found in Leuconostoc citreum (strain KM20).